Reading from the N-terminus, the 305-residue chain is Cyclin-dependent kinase 3 (305 aa).

A Protein kinase domain is found at 4-286 (FQKVEKIGEG…AKTALAHPYF (283 aa)). Residues 10–18 (IGEGTYGVV) and Lys33 contribute to the ATP site. The active-site Proton acceptor is the Asp127.

This sequence belongs to the protein kinase superfamily. CMGC Ser/Thr protein kinase family. CDC2/CDKX subfamily. Interacts with CABLES1 and CABLES2. Interacts with ATF1. Binding to CCNC/cyclin-C promotes RB1 phosphorylation. Expressed in cancer cell lines and glioblastoma tissue.

It carries out the reaction L-seryl-[protein] + ATP = O-phospho-L-seryl-[protein] + ADP + H(+). The enzyme catalyses L-threonyl-[protein] + ATP = O-phospho-L-threonyl-[protein] + ADP + H(+). Its function is as follows. Serine/threonine-protein kinase that plays a critical role in the control of the eukaryotic cell cycle; involved in G0-G1 and G1-S cell cycle transitions. Interacts with CCNC/cyclin-C during interphase. Phosphorylates histone H1, ATF1, RB1 and CABLES1. ATF1 phosphorylation triggers ATF1 transactivation and transcriptional activities, and promotes cell proliferation and transformation. CDK3/cyclin-C mediated RB1 phosphorylation is required for G0-G1 transition. Promotes G1-S transition probably by contributing to the activation of E2F1, E2F2 and E2F3 in a RB1-independent manner. In Homo sapiens (Human), this protein is Cyclin-dependent kinase 3 (CDK3).